We begin with the raw amino-acid sequence, 450 residues long: Glucose-6-phosphate isomerase (450 aa).

Glu-291 serves as the catalytic Proton donor. Active-site residues include His-312 and Lys-426.

The protein belongs to the GPI family.

It localises to the cytoplasm. The catalysed reaction is alpha-D-glucose 6-phosphate = beta-D-fructose 6-phosphate. Its pathway is carbohydrate biosynthesis; gluconeogenesis. It participates in carbohydrate degradation; glycolysis; D-glyceraldehyde 3-phosphate and glycerone phosphate from D-glucose: step 2/4. Its function is as follows. Catalyzes the reversible isomerization of glucose-6-phosphate to fructose-6-phosphate. This chain is Glucose-6-phosphate isomerase, found in Clostridium perfringens (strain ATCC 13124 / DSM 756 / JCM 1290 / NCIMB 6125 / NCTC 8237 / Type A).